The primary structure comprises 189 residues: Leucine repeat adapter protein 25 (189 aa).

Ser28 carries the phosphoserine modification. The segment at 55–81 (LSRAARAPDGPRHAAGSANLGSAAGPR) is disordered. Over residues 68–79 (AAGSANLGSAAG) the composition is skewed to low complexity. The stretch at 86 to 114 (LDSALAALRKEMVGLRQLDMSLLCQLWGL) is one LRR repeat. Residues 141 to 174 (DSSYPPDAGLSDDDEPPDASLPPDPPPLTVPQTH) are disordered. Residues 159 to 169 (ASLPPDPPPLT) are compositionally biased toward pro residues. Residue Ser188 is modified to Phosphoserine.

The protein belongs to the FAM89 family. Interacts with SKI. Interacts (via LRR repeat) with CDC42BPA (via AGC-kinase C-terminal domain) and CDC42BPB (via AGC-kinase C-terminal domain). Interacts (via LRR repeat) with LIMK1 (via LIM zinc-binding domains). Forms a tripartite complex with CDC42BPA, CDC42BPB and LIMK1.

The protein localises to the cytoplasm. It is found in the cell projection. It localises to the lamellipodium. Its function is as follows. Negatively regulates TGF-beta-induced signaling; in cooperation with SKI prevents the translocation of SMAD2 from the nucleus to the cytoplasm in response to TGF-beta. Acts as an adapter that mediates the specific recognition of LIMK1 by CDC42BPA and CDC42BPB in the lamellipodia. LRAP25-mediated CDC42BPA/CDC42BPB targeting to LIMK1 and the lamellipodium results in LIMK1 activation and the subsequent phosphorylation of CFL1 which is important for lamellipodial F-actin regulation. This is Leucine repeat adapter protein 25 from Rattus norvegicus (Rat).